The chain runs to 214 residues: Large ribosomal subunit protein uL3 (214 aa).

The disordered stretch occupies residues 129–155 (FGRGPMSHGSKNHRRPGSVGAGTTPGR).

This sequence belongs to the universal ribosomal protein uL3 family. Part of the 50S ribosomal subunit. Forms a cluster with proteins L14 and L19.

In terms of biological role, one of the primary rRNA binding proteins, it binds directly near the 3'-end of the 23S rRNA, where it nucleates assembly of the 50S subunit. This chain is Large ribosomal subunit protein uL3, found in Synechococcus sp. (strain JA-3-3Ab) (Cyanobacteria bacterium Yellowstone A-Prime).